An 838-amino-acid chain; its full sequence is P protein (838 aa).

Topologically, residues 1 to 179 (MHLEGRDGRR…KLRRCVQWLK (179 aa)) are cytoplasmic. 2 disordered regions span residues 38-60 (LPRGAGGADPSHSCPRGAAGQSS) and 74-94 (KGRSHSSLPQMSSSRSKDSCF). Polar residues predominate over residues 78–87 (HSSLPQMSSS). A helical membrane pass occupies residues 180-197 (VMGLFAFVVLCSILFSLY). Over 198–330 (PDQGKLWQLL…QYLRGSVETQ (133 aa)) the chain is Extracellular. Asparagine 214, asparagine 218, and asparagine 273 each carry an N-linked (GlcNAc...) asparagine glycan. The helical transmembrane segment at 331–347 (VTIATAILAGVYALIIF) threads the bilayer. Residues 348–353 (EIVHRT) lie on the Cytoplasmic side of the membrane. Residues 354–370 (LAAMLGSLAALAALAVI) form a helical membrane-spanning segment. Residues 371-384 (GDRPSLTHVVEWID) are Extracellular-facing. Residues 385 to 401 (FETLALLFGMMILVAIF) traverse the membrane as a helical segment. The Cytoplasmic portion of the chain corresponds to 402-423 (SETGFFDYCAVKAYRLSRGRVW). A helical transmembrane segment spans residues 424 to 440 (AMIIMLCLIAAVLSAFL). The Extracellular segment spans residues 441 to 513 (DNVTTMLLFT…DFAGFTAHMF (73 aa)). Asparagine 442 is a glycosylation site (N-linked (GlcNAc...) asparagine). The helical transmembrane segment at 514-530 (IGICLVLLVCFPLLRLL) threads the bilayer. At 531 to 620 (YWNRKLYNKE…LQKKHRISDG (90 aa)) the chain is on the cytoplasmic side. Residues 621-637 (ILLAKCLTVLGFVIFMF) form a helical membrane-spanning segment. Residues 638 to 647 (FLNSFVPGIH) are Extracellular-facing. The helical transmembrane segment at 648–664 (LDLGWIAILGAIWLLIL) threads the bilayer. Residues 665 to 679 (ADIHDFEIILHRVEW) are Cytoplasmic-facing. A helical transmembrane segment spans residues 680 to 696 (ATLLFFAALFVLMEALA). Over 697-720 (HLHLIEYVGEQTALLIKMVPEEQR) the chain is Extracellular. A helical transmembrane segment spans residues 721–737 (LIAAIVLVVWVSALASS). Residues 738–760 (LIDNIPFTATMIPVLLNLSHDPE) are Cytoplasmic-facing. Residues 761–777 (VGLPAPPLMYALAFGAC) form a helical membrane-spanning segment. Residues 778–817 (LGGNGTLIGASANVVCAGIAEQHGYGFSFMEFFRLGFPMM) lie on the Extracellular side of the membrane. N-linked (GlcNAc...) asparagine glycosylation is present at asparagine 781. Residues 818-834 (VVSCTVGMCYLLVAHVV) form a helical membrane-spanning segment. Over 835–838 (VGWN) the chain is Cytoplasmic.

Belongs to the CitM (TC 2.A.11) transporter family. In terms of tissue distribution, expressed in melanocytes and retinal pigment epithelium.

The protein localises to the melanosome membrane. It catalyses the reaction chloride(in) = chloride(out). Contributes to a melanosome-specific anion (chloride) current that modulates melanosomal pH for optimal tyrosinase activity required for melanogenesis and the melanosome maturation. One of the components of the mammalian pigmentary system. May serve as a key control point at which ethnic skin color variation is determined. Major determinant of brown and/or blue eye color. Seems to regulate the post-translational processing of tyrosinase, which catalyzes the limiting reaction in melanin synthesis. This Homo sapiens (Human) protein is P protein.